A 371-amino-acid polypeptide reads, in one-letter code: tRNA (guanine(26)-N(2))-dimethyltransferase (371 aa).

In terms of domain architecture, Trm1 methyltransferase spans 4 to 368; it reads IEVTEGRTTF…APLDAIAAAL (365 aa). S-adenosyl-L-methionine-binding residues include R41, R66, D82, D108, and A109. Residues C237, C240, C256, and C259 each coordinate Zn(2+).

The protein belongs to the class I-like SAM-binding methyltransferase superfamily. Trm1 family.

The enzyme catalyses guanosine(26) in tRNA + 2 S-adenosyl-L-methionine = N(2)-dimethylguanosine(26) in tRNA + 2 S-adenosyl-L-homocysteine + 2 H(+). Dimethylates a single guanine residue at position 26 of a number of tRNAs using S-adenosyl-L-methionine as donor of the methyl groups. The polypeptide is tRNA (guanine(26)-N(2))-dimethyltransferase (Methanosphaerula palustris (strain ATCC BAA-1556 / DSM 19958 / E1-9c)).